The sequence spans 150 residues: MKLTSKGRYAVTAVLDIALNADGGPVSLADISERQHISLSYLEQLFAKLRKDGLVKSVRGPGGGYQLGLPSEQISVGMIIAAVNENIHVTKCLGRENCKNGVECLTHELWEDLSLRIESFLNEITLAELVNKRNVKRQSHRDFNNLLVNQ.

Positions 2–131 (KLTSKGRYAV…NEITLAELVN (130 aa)) constitute an HTH rrf2-type domain.

The polypeptide is Putative HTH-type transcriptional regulator HI_0379 (Haemophilus influenzae (strain ATCC 51907 / DSM 11121 / KW20 / Rd)).